Reading from the N-terminus, the 589-residue chain is Vomeromodulin (589 aa).

The N-terminal stretch at methionine 1–serine 29 is a signal peptide. Disordered stretches follow at residues glycine 49 to glycine 71 and leucine 146 to glutamine 170. Residues asparagine 419 and asparagine 437 are each glycosylated (N-linked (GlcNAc...) asparagine).

Post-translationally, N-glycosylated. The N-glycans consist mainly of complex sialylated and fucosylated biantennary structures. Abundant in the lateral nasal glands. Also present in the posterior septal and vomeronasal glands.

The protein localises to the secreted. The polypeptide is Vomeromodulin (Rattus norvegicus (Rat)).